The primary structure comprises 188 residues: Nicotinamide-nucleotide adenylyltransferase (188 aa).

It belongs to the archaeal NMN adenylyltransferase family.

The protein resides in the cytoplasm. It carries out the reaction beta-nicotinamide D-ribonucleotide + ATP + H(+) = diphosphate + NAD(+). Its pathway is cofactor biosynthesis; NAD(+) biosynthesis; NAD(+) from nicotinamide D-ribonucleotide: step 1/1. The protein is Nicotinamide-nucleotide adenylyltransferase of Pyrococcus furiosus (strain ATCC 43587 / DSM 3638 / JCM 8422 / Vc1).